A 615-amino-acid chain; its full sequence is uncharacterized protein (615 aa).

3 stretches are compositionally biased toward polar residues: residues 1 to 11 (MSETSSNSPAS), 41 to 55 (LSQN…SSKV), and 128 to 140 (TSGS…NAPP). Disordered stretches follow at residues 1 to 61 (MSET…QALV) and 97 to 149 (HQNH…KASS). Residues Ser-149 and Ser-152 each carry the phosphoserine modification. The interval 181-217 (LIHPEQTDRGLPYAPDEKFHNSGSLKLPKGASLEDLS) is disordered. Residues Ser-219 and Ser-275 each carry the phosphoserine modification. Disordered regions lie at residues 266–481 (KPLA…KFTG), 493–565 (RLQK…KPSF), and 586–615 (GVET…TEEQ). Residues 272 to 283 (RQRSTADLTESD) are compositionally biased toward polar residues. 2 positions are modified to phosphothreonine: Thr-276 and Thr-297. Residues 312–323 (EAEKGFYTKDGE) are compositionally biased toward basic and acidic residues. Over residues 356–376 (PSLSSASQPSAASSSSSSEPS) the composition is skewed to low complexity. A compositionally biased stretch (polar residues) spans 505 to 522 (PNKSKSPSGTKSPASGET). Thr-514 is modified (phosphothreonine). Residue Ser-516 is modified to Phosphoserine. Residues 586–599 (GVETRKEVEPKEEA) show a composition bias toward basic and acidic residues. Positions 600–615 (VIPEEDVEVEVETEEQ) are enriched in acidic residues.

This is an uncharacterized protein from Schizosaccharomyces pombe (strain 972 / ATCC 24843) (Fission yeast).